We begin with the raw amino-acid sequence, 424 residues long: Serine--tRNA ligase (424 aa).

230-232 (TAE) contacts L-serine. 261–263 (RSE) provides a ligand contact to ATP. E284 contacts L-serine. 348-351 (EISS) contributes to the ATP binding site. S384 is an L-serine binding site.

It belongs to the class-II aminoacyl-tRNA synthetase family. Type-1 seryl-tRNA synthetase subfamily. Homodimer. The tRNA molecule binds across the dimer.

The protein localises to the cytoplasm. The catalysed reaction is tRNA(Ser) + L-serine + ATP = L-seryl-tRNA(Ser) + AMP + diphosphate + H(+). The enzyme catalyses tRNA(Sec) + L-serine + ATP = L-seryl-tRNA(Sec) + AMP + diphosphate + H(+). It functions in the pathway aminoacyl-tRNA biosynthesis; selenocysteinyl-tRNA(Sec) biosynthesis; L-seryl-tRNA(Sec) from L-serine and tRNA(Sec): step 1/1. Functionally, catalyzes the attachment of serine to tRNA(Ser). Is also able to aminoacylate tRNA(Sec) with serine, to form the misacylated tRNA L-seryl-tRNA(Sec), which will be further converted into selenocysteinyl-tRNA(Sec). The polypeptide is Serine--tRNA ligase (Desulfatibacillum aliphaticivorans).